The sequence spans 166 residues: Ribosome maturation factor RimM (166 aa).

Residues 94-165 form the PRC barrel domain; the sequence is EGEYYLGKLI…TIELKVLDLL (72 aa).

It belongs to the RimM family. As to quaternary structure, binds ribosomal protein uS19.

It localises to the cytoplasm. In terms of biological role, an accessory protein needed during the final step in the assembly of 30S ribosomal subunit, possibly for assembly of the head region. Essential for efficient processing of 16S rRNA. May be needed both before and after RbfA during the maturation of 16S rRNA. It has affinity for free ribosomal 30S subunits but not for 70S ribosomes. The chain is Ribosome maturation factor RimM from Borreliella afzelii (strain PKo) (Borrelia afzelii).